The chain runs to 454 residues: Macrophage scavenger receptor types I and II (454 aa).

The disordered stretch occupies residues 1-22; it reads MAQWDSFTDQQEDTDSCSESVK. Residues 1–50 lie on the Cytoplasmic side of the membrane; it reads MAQWDSFTDQQEDTDSCSESVKFDARSNTALLPPNPKNGPPLQEKLKSFK. S27 carries the phosphoserine modification. A helical; Signal-anchor for type II membrane protein transmembrane segment spans residues 51-73; it reads AALIALYLLVFAVLIPIIAIMAA. Positions 74–109 are spacer; the sequence is QLLKWEMKNCTVGSINANSVSSSLLGRGNDSEHEVR. Residues 74–454 lie on the Extracellular side of the membrane; it reads QLLKWEMKNC…GEDAGVTCTL (381 aa). N82, N102, N143, N184, N221, N249, and N267 each carry an N-linked (GlcNAc...) asparagine glycan. Residues 199-256 adopt a coiled-coil conformation; that stretch reads VKFQENTLKGQEEISKLKERVHNASAEIMSMKEEQVHLEQEIKREVKVLNNITNDLRL. Positions 267–347 are disordered; that stretch reads NITLIQGPPG…KGEKGSGSIL (81 aa). One can recognise a Collagen-like domain in the interval 273-344; that stretch reads GPPGPPGEKG…KGQKGEKGSG (72 aa). The SRCR domain maps to 353-453; the sequence is VRLVGGRGPH…HGEDAGVTCT (101 aa). Cystine bridges form between C378–C442, C391–C452, and C422–C432.

Homotrimer. Interacts with MYO18A.

It localises to the membrane. Membrane glycoproteins implicated in the pathologic deposition of cholesterol in arterial walls during atherogenesis. Two types of receptor subunits exist. These receptors mediate the endocytosis of a diverse group of macromolecules, including modified low density lipoproteins (LDL). The protein is Macrophage scavenger receptor types I and II (MSR1) of Oryctolagus cuniculus (Rabbit).